The chain runs to 589 residues: V-type ATP synthase alpha chain (589 aa).

Gly239–Thr246 lines the ATP pocket.

It belongs to the ATPase alpha/beta chains family.

It catalyses the reaction ATP + H2O + 4 H(+)(in) = ADP + phosphate + 5 H(+)(out). Its function is as follows. Produces ATP from ADP in the presence of a proton gradient across the membrane. The V-type alpha chain is a catalytic subunit. The sequence is that of V-type ATP synthase alpha chain from Treponema denticola (strain ATCC 35405 / DSM 14222 / CIP 103919 / JCM 8153 / KCTC 15104).